A 221-amino-acid polypeptide reads, in one-letter code: Protein-L-isoaspartate O-methyltransferase (221 aa).

S64 is an active-site residue.

Belongs to the methyltransferase superfamily. L-isoaspartyl/D-aspartyl protein methyltransferase family.

It is found in the cytoplasm. It carries out the reaction [protein]-L-isoaspartate + S-adenosyl-L-methionine = [protein]-L-isoaspartate alpha-methyl ester + S-adenosyl-L-homocysteine. Functionally, catalyzes the methyl esterification of L-isoaspartyl residues in peptides and proteins that result from spontaneous decomposition of normal L-aspartyl and L-asparaginyl residues. It plays a role in the repair and/or degradation of damaged proteins. This Thermococcus sibiricus (strain DSM 12597 / MM 739) protein is Protein-L-isoaspartate O-methyltransferase.